Consider the following 688-residue polypeptide: Translation initiation factor IF-2 (688 aa).

The segment covering 50–62 (LLSGKEKSEKTKE) has biased composition (basic and acidic residues). The tract at residues 50-95 (LLSGKEKSEKTKEEDDEIETTAKNPIKESINNKKSNKRDDKKEKVN) is disordered. Positions 72 to 82 (KNPIKESINNK) are enriched in low complexity. Residues 86-95 (KRDDKKEKVN) show a composition bias toward basic and acidic residues. The 168-residue stretch at 187 to 354 (KRSPIITVMG…MILLSSEILE (168 aa)) folds into the tr-type G domain. Positions 196–203 (GHVDHGKT) are G1. 196 to 203 (GHVDHGKT) lines the GTP pocket. The segment at 221 to 225 (GITQH) is G2. The interval 242–245 (DTPG) is G3. GTP is bound by residues 242–246 (DTPGH) and 296–299 (NKID). The tract at residues 296 to 299 (NKID) is G4. The interval 332–334 (SAH) is G5.

Belongs to the TRAFAC class translation factor GTPase superfamily. Classic translation factor GTPase family. IF-2 subfamily.

The protein localises to the cytoplasm. Its function is as follows. One of the essential components for the initiation of protein synthesis. Protects formylmethionyl-tRNA from spontaneous hydrolysis and promotes its binding to the 30S ribosomal subunits. Also involved in the hydrolysis of GTP during the formation of the 70S ribosomal complex. The chain is Translation initiation factor IF-2 from Clostridium botulinum (strain 657 / Type Ba4).